Here is a 188-residue protein sequence, read N- to C-terminus: Elongation factor P (188 aa).

Position 34 is an N6-(3,6-diaminohexanoyl)-5-hydroxylysine (Lys34).

This sequence belongs to the elongation factor P family. In terms of processing, may be beta-lysylated on the epsilon-amino group of Lys-34 by the combined action of EpmA and EpmB, and then hydroxylated on the C5 position of the same residue by EpmC (if this protein is present). Lysylation is critical for the stimulatory effect of EF-P on peptide-bond formation. The lysylation moiety may extend toward the peptidyltransferase center and stabilize the terminal 3-CCA end of the tRNA. Hydroxylation of the C5 position on Lys-34 may allow additional potential stabilizing hydrogen-bond interactions with the P-tRNA.

It localises to the cytoplasm. The protein operates within protein biosynthesis; polypeptide chain elongation. Functionally, involved in peptide bond synthesis. Alleviates ribosome stalling that occurs when 3 or more consecutive Pro residues or the sequence PPG is present in a protein, possibly by augmenting the peptidyl transferase activity of the ribosome. Modification of Lys-34 is required for alleviation. The protein is Elongation factor P of Vibrio cholerae serotype O1 (strain ATCC 39541 / Classical Ogawa 395 / O395).